The chain runs to 154 residues: Protein X (154 aa).

A mitochondrial targeting sequence region spans residues 68–117 (PCALRFTFARRMETTVNAHQVLPKVLHKRTLGLSAMSTTDLEAYFKDCVF).

This sequence belongs to the orthohepadnavirus protein X family. As to quaternary structure, may form homodimer. May interact with host CEBPA, CFLAR, CREB1, DDB1, E4F1, HBXIP, HSPD1/HSP60, NFKBIA, POLR2E and SMAD4. Interacts with host SMC5-SMC6 complex and induces its degradation. Interacts with host TRPC4AP; leading to prevent ubiquitination of TRPC4AP. Interacts with host PLSCR1; this interaction promotes ubiquitination and degradation of HBx and impairs HBx-mediated cell proliferation. In terms of processing, a fraction may be phosphorylated in insect cells and HepG2 cells, a human hepatoblastoma cell line. Phosphorylated in vitro by host protein kinase C or mitogen-activated protein kinase. N-acetylated in insect cells.

The protein localises to the host cytoplasm. Its subcellular location is the host nucleus. It localises to the host mitochondrion. Functionally, multifunctional protein that plays a role in silencing host antiviral defenses and promoting viral transcription. Does not seem to be essential for HBV infection. May be directly involved in development of cirrhosis and liver cancer (hepatocellular carcinoma). Most of cytosolic activities involve modulation of cytosolic calcium. The effect on apoptosis is controversial depending on the cell types in which the studies have been conducted. May induce apoptosis by localizing in mitochondria and causing loss of mitochondrial membrane potential. May also modulate apoptosis by binding host CFLAR, a key regulator of the death-inducing signaling complex (DISC). Promotes viral transcription by using the host E3 ubiquitin ligase DDB1 to target the SMC5-SMC6 complex to proteasomal degradation. This host complex would otherwise bind to viral episomal DNA, and prevents its transcription. Moderately stimulates transcription of many different viral and cellular transcription elements. Promoters and enhancers stimulated by HBx contain DNA binding sites for NF-kappa-B, AP-1, AP-2, c-EBP, ATF/CREB, or the calcium-activated factor NF-AT. This is Protein X from Hepatitis B virus genotype C subtype ayw (isolate China/Tibet127/2002) (HBV-C).